A 577-amino-acid polypeptide reads, in one-letter code: MNIQALLSEKVRQAMIAAGAPADCEPQVRQSAKVQFGDYQANGMMAVAKKLGMAPRQLAEQVLTHLDLNGIASKVEIAGPGFINIFLDPAFLAEHVQQALASDRLGVATPEKQTIVVDYSAPNVAKEMHVGHLRSTIIGDAAVRTLEFLGHKVIRANHVGDWGTQFGMLIAWLEKQQQENAGEMELADLEGFYRDAKKHYDEDEEFAERARNYVVKLQSGDEYFREMWRKLVDITMTQNQITYDRLNVTLTRDDVMGESLYNPMLPGIVADLKAKGLAVESEGATVVFLDEFKNKEGEPMGVIIQKKDGGYLYTTTDIACAKYRYETLHADRVLYYIDSRQHQHLMQAWAIVRKAGYVPESVPLEHHMFGMMLGKDGKPFKTRAGGTVKLADLLDEALERARRLVAEKNPDMPADGLEKLANAVGIGAVKYADLSKNRTTDYIFDWDNMLAFEGNTAPYMQYAYTRVLSVFRKAEIDEEQLAAAPVIIREDREAQLAARLLQFEETLTVVAREGTPHVMCAYLYDLAGLFSGFYEHCPILSAENEEVRNSRLKLAQLTAKTLKLGLDTLGIETVERM.

The 'HIGH' region signature appears at Pro-122–His-132.

Belongs to the class-I aminoacyl-tRNA synthetase family. As to quaternary structure, monomer.

It is found in the cytoplasm. The enzyme catalyses tRNA(Arg) + L-arginine + ATP = L-arginyl-tRNA(Arg) + AMP + diphosphate. The polypeptide is Arginine--tRNA ligase (Escherichia coli O9:H4 (strain HS)).